Here is a 364-residue protein sequence, read N- to C-terminus: Dual-specificity RNA methyltransferase RlmN (364 aa).

Residue Glu-93 is the Proton acceptor of the active site. In terms of domain architecture, Radical SAM core spans 99–337 (EDDRGTLCIS…ATIRKTRGDD (239 aa)). Cys-106 and Cys-342 are disulfide-bonded. [4Fe-4S] cluster is bound by residues Cys-113, Cys-117, and Cys-120. S-adenosyl-L-methionine is bound by residues 167–168 (GE), Ser-199, 221–223 (SLH), and Asn-299. Catalysis depends on Cys-342, which acts as the S-methylcysteine intermediate.

This sequence belongs to the radical SAM superfamily. RlmN family. [4Fe-4S] cluster is required as a cofactor.

Its subcellular location is the cytoplasm. The catalysed reaction is adenosine(2503) in 23S rRNA + 2 reduced [2Fe-2S]-[ferredoxin] + 2 S-adenosyl-L-methionine = 2-methyladenosine(2503) in 23S rRNA + 5'-deoxyadenosine + L-methionine + 2 oxidized [2Fe-2S]-[ferredoxin] + S-adenosyl-L-homocysteine. The enzyme catalyses adenosine(37) in tRNA + 2 reduced [2Fe-2S]-[ferredoxin] + 2 S-adenosyl-L-methionine = 2-methyladenosine(37) in tRNA + 5'-deoxyadenosine + L-methionine + 2 oxidized [2Fe-2S]-[ferredoxin] + S-adenosyl-L-homocysteine. In terms of biological role, specifically methylates position 2 of adenine 2503 in 23S rRNA and position 2 of adenine 37 in tRNAs. m2A2503 modification seems to play a crucial role in the proofreading step occurring at the peptidyl transferase center and thus would serve to optimize ribosomal fidelity. The protein is Dual-specificity RNA methyltransferase RlmN of Dichelobacter nodosus (strain VCS1703A).